A 157-amino-acid chain; its full sequence is 2-C-methyl-D-erythritol 2,4-cyclodiphosphate synthase (157 aa).

Residues Asp-8 and His-10 each contribute to the a divalent metal cation site. 4-CDP-2-C-methyl-D-erythritol 2-phosphate-binding positions include Asp-8 to His-10 and His-34 to Ser-35. His-42 provides a ligand contact to a divalent metal cation. 4-CDP-2-C-methyl-D-erythritol 2-phosphate is bound by residues Asp-56–Gly-58, Phe-61–Asp-65, Ala-100–Ala-106, Thr-132–Glu-135, and Phe-139.

It belongs to the IspF family. In terms of assembly, homotrimer. Requires a divalent metal cation as cofactor.

It catalyses the reaction 4-CDP-2-C-methyl-D-erythritol 2-phosphate = 2-C-methyl-D-erythritol 2,4-cyclic diphosphate + CMP. It functions in the pathway isoprenoid biosynthesis; isopentenyl diphosphate biosynthesis via DXP pathway; isopentenyl diphosphate from 1-deoxy-D-xylulose 5-phosphate: step 4/6. Involved in the biosynthesis of isopentenyl diphosphate (IPP) and dimethylallyl diphosphate (DMAPP), two major building blocks of isoprenoid compounds. Catalyzes the conversion of 4-diphosphocytidyl-2-C-methyl-D-erythritol 2-phosphate (CDP-ME2P) to 2-C-methyl-D-erythritol 2,4-cyclodiphosphate (ME-CPP) with a corresponding release of cytidine 5-monophosphate (CMP). In Clostridium novyi (strain NT), this protein is 2-C-methyl-D-erythritol 2,4-cyclodiphosphate synthase.